Here is a 345-residue protein sequence, read N- to C-terminus: MSTAAPNETTQPTVQSGQKRVGVLLVNLGTPDTADAPGVRVYLKEFLSDARVIEDQGLVWKVVLNGIILRSRPRTKALDYQKIWNNEKNESPLKTITRSQSDKLAAALSDRDHVVVDWAMRYGNPSIKSGIDALIAEGCDRILAVPLYPQYSASTSATVCDEVFRVLARLRAQPTLRVTPPYYEDEAYIEALAVSIETHLATLPFKPELIVASFHGMPKSYVDKGDPYQEHCIATTEALRRRLGVDASKLLLTFQSRFGNDEWLQPYTDKTMERLAKEGVRRIAVVTPGFAADCLETLEEIAQENAEIFKHNGGEQFSAIPCLNDSEPGMDVIRTLVLRELQGWI.

His215 and Glu296 together coordinate Fe cation.

It belongs to the ferrochelatase family.

Its subcellular location is the cytoplasm. It catalyses the reaction heme b + 2 H(+) = protoporphyrin IX + Fe(2+). The protein operates within porphyrin-containing compound metabolism; protoheme biosynthesis; protoheme from protoporphyrin-IX: step 1/1. Its function is as follows. Catalyzes the ferrous insertion into protoporphyrin IX. Essential for normal nodule development. The chain is Ferrochelatase from Bradyrhizobium diazoefficiens (strain JCM 10833 / BCRC 13528 / IAM 13628 / NBRC 14792 / USDA 110).